Consider the following 951-residue polypeptide: Glycine dehydrogenase (decarboxylating) 1 (951 aa).

N6-(pyridoxal phosphate)lysine is present on lysine 703.

The protein belongs to the GcvP family. As to quaternary structure, the glycine cleavage system is composed of four proteins: P, T, L and H. Requires pyridoxal 5'-phosphate as cofactor.

It catalyses the reaction N(6)-[(R)-lipoyl]-L-lysyl-[glycine-cleavage complex H protein] + glycine + H(+) = N(6)-[(R)-S(8)-aminomethyldihydrolipoyl]-L-lysyl-[glycine-cleavage complex H protein] + CO2. Its function is as follows. The glycine cleavage system catalyzes the degradation of glycine. The P protein binds the alpha-amino group of glycine through its pyridoxal phosphate cofactor; CO(2) is released and the remaining methylamine moiety is then transferred to the lipoamide cofactor of the H protein. In Pseudomonas putida (strain ATCC 47054 / DSM 6125 / CFBP 8728 / NCIMB 11950 / KT2440), this protein is Glycine dehydrogenase (decarboxylating) 1 (gcvP1).